Consider the following 307-residue polypeptide: UPF0276 protein Bphyt_5128 (307 aa).

The protein belongs to the UPF0276 family.

The protein is UPF0276 protein Bphyt_5128 of Paraburkholderia phytofirmans (strain DSM 17436 / LMG 22146 / PsJN) (Burkholderia phytofirmans).